Here is a 278-residue protein sequence, read N- to C-terminus: 4-deoxy-L-threo-5-hexosulose-uronate ketol-isomerase (278 aa).

Zn(2+) is bound by residues His-196, His-198, Glu-203, and His-245.

The protein belongs to the KduI family. As to quaternary structure, homohexamer. Zn(2+) serves as cofactor.

It carries out the reaction 5-dehydro-4-deoxy-D-glucuronate = 3-deoxy-D-glycero-2,5-hexodiulosonate. Its pathway is glycan metabolism; pectin degradation; 2-dehydro-3-deoxy-D-gluconate from pectin: step 4/5. Catalyzes the isomerization of 5-dehydro-4-deoxy-D-glucuronate to 3-deoxy-D-glycero-2,5-hexodiulosonate. The protein is 4-deoxy-L-threo-5-hexosulose-uronate ketol-isomerase of Escherichia coli (strain K12 / MC4100 / BW2952).